Reading from the N-terminus, the 105-residue chain is Large ribosomal subunit protein eL30 (105 aa).

Residues Lys22, Lys53, and Lys83 each participate in a glycyl lysine isopeptide (Lys-Gly) (interchain with G-Cter in ubiquitin) cross-link.

It belongs to the eukaryotic ribosomal protein eL30 family. Component of the large ribosomal subunit (LSU). Mature yeast ribosomes consist of a small (40S) and a large (60S) subunit. The 40S small subunit contains 1 molecule of ribosomal RNA (18S rRNA) and 33 different proteins (encoded by 57 genes). The large 60S subunit contains 3 rRNA molecules (25S, 5.8S and 5S rRNA) and 46 different proteins (encoded by 81 genes).

The protein localises to the cytoplasm. In terms of biological role, component of the ribosome, a large ribonucleoprotein complex responsible for the synthesis of proteins in the cell. The small ribosomal subunit (SSU) binds messenger RNAs (mRNAs) and translates the encoded message by selecting cognate aminoacyl-transfer RNA (tRNA) molecules. The large subunit (LSU) contains the ribosomal catalytic site termed the peptidyl transferase center (PTC), which catalyzes the formation of peptide bonds, thereby polymerizing the amino acids delivered by tRNAs into a polypeptide chain. The nascent polypeptides leave the ribosome through a tunnel in the LSU and interact with protein factors that function in enzymatic processing, targeting, and the membrane insertion of nascent chains at the exit of the ribosomal tunnel. The chain is Large ribosomal subunit protein eL30 from Saccharomyces cerevisiae (strain ATCC 204508 / S288c) (Baker's yeast).